A 137-amino-acid chain; its full sequence is Proofreading thioesterase EntH (137 aa).

E63 functions as the Nucleophile or proton acceptor in the catalytic mechanism.

Belongs to the thioesterase PaaI family. In terms of assembly, homotetramer. Dimer of dimers. Interacts specifically with the aryl carrier protein (ArCP) domain of EntB.

The protein localises to the cytoplasm. It functions in the pathway siderophore biosynthesis; enterobactin biosynthesis. Its function is as follows. Required for optimal enterobactin synthesis. Acts as a proofreading enzyme that prevents EntB misacylation by hydrolyzing the thioester bound existing between EntB and wrongly charged molecules. This chain is Proofreading thioesterase EntH, found in Escherichia coli O157:H7 (strain EC4115 / EHEC).